The sequence spans 350 residues: Protein FAM118B (350 aa).

Ala-2 is subject to N-acetylalanine. Position 9 is a phosphoserine (Ser-9).

It belongs to the FAM118 family.

The protein localises to the nucleus. It is found in the cajal body. In terms of biological role, may play a role in Cajal bodies formation. The chain is Protein FAM118B (FAM118B) from Macaca fascicularis (Crab-eating macaque).